Reading from the N-terminus, the 283-residue chain is uncharacterized protein (283 aa).

It belongs to the glycosyltransferase 2 family. WaaE/KdtX subfamily.

This is an uncharacterized protein from Rickettsia felis (strain ATCC VR-1525 / URRWXCal2) (Rickettsia azadi).